The chain runs to 309 residues: Probable L,D-transpeptidase ErfK/SrfK (309 aa).

The N-terminal stretch at 1-21 (MRRITPFFPFFVLLVSHFSLA) is a signal peptide. The 136-residue stretch at 96 to 231 (EGIVVNVAEM…VPVGTRVQII (136 aa)) folds into the L,D-TPase catalytic domain. Residue H191 is the Proton donor/acceptor of the active site. Residue C207 is the Nucleophile of the active site.

The protein belongs to the YkuD family.

It localises to the periplasm. The protein operates within cell wall biogenesis; peptidoglycan biosynthesis. In Salmonella typhimurium (strain LT2 / SGSC1412 / ATCC 700720), this protein is Probable L,D-transpeptidase ErfK/SrfK (erfK).